We begin with the raw amino-acid sequence, 424 residues long: D-inositol 3-phosphate glycosyltransferase (424 aa).

His21 contacts 1D-myo-inositol 3-phosphate. Residues 27–28 (QP) and Gly35 contribute to the UDP-N-acetyl-alpha-D-glucosamine site. 1D-myo-inositol 3-phosphate-binding positions include 32–37 (DAGGMN), Lys90, Tyr123, Thr147, and Arg167. 3 residues coordinate UDP-N-acetyl-alpha-D-glucosamine: Arg241, Lys246, and Gln299. Phe308, Gln309, and Ala311 together coordinate Mg(2+). UDP-N-acetyl-alpha-D-glucosamine-binding residues include Glu321 and Glu329. Position 335 (Thr335) interacts with Mg(2+).

The protein belongs to the glycosyltransferase group 1 family. MshA subfamily. Homodimer.

It carries out the reaction 1D-myo-inositol 3-phosphate + UDP-N-acetyl-alpha-D-glucosamine = 1D-myo-inositol 2-acetamido-2-deoxy-alpha-D-glucopyranoside 3-phosphate + UDP + H(+). Its function is as follows. Catalyzes the transfer of a N-acetyl-glucosamine moiety to 1D-myo-inositol 3-phosphate to produce 1D-myo-inositol 2-acetamido-2-deoxy-glucopyranoside 3-phosphate in the mycothiol biosynthesis pathway. The polypeptide is D-inositol 3-phosphate glycosyltransferase (Mycobacterium avium (strain 104)).